The sequence spans 354 residues: MPAAGSEPSRPPSPPGVQEQSAEPRPPPPPHGELQYLGQIEHILRCGFRRDDRTGTGTLSVFGMQARYNLRDEFPLLTTKRVFWKGVLEELLWFIKGSTNAKELSSKGVKIWDANGSRDFLDGLGFSDRAEGDLGPVYGFQWRHFGAEYKDMDSEYSGQGVDQLQKVIDTIKTNPNDRRIILCAWNPKDLPLMALPPCHALCQFYVVNGELSCQLYQRSGDMGLGVPFNIASYALLTYMIAHITDLKPGDFVHTLGDAHIYLNHIEPLKTQALMELRGQSSRSLDGDGQAGTSRWAPVATDTERDRCCELQREPRPFPKLKILRKVETIDDFQAEDFQIEGYNPNPTIKMEMAV.

Residues Met-1–Gly-32 form a disordered region. Arg-53 provides a ligand contact to dUMP. Ser-117 carries the phosphoserine modification. Arg-178–Arg-179 is a dUMP binding site. Catalysis depends on Cys-198, which acts as the Nucleophile. DUMP-binding positions include Arg-218–Asp-221, Asn-229, and His-259–Tyr-261. Asp-221 provides a ligand contact to (6R)-5,10-methylene-5,6,7,8-tetrahydrofolate. Lys-349 is covalently cross-linked (Glycyl lysine isopeptide (Lys-Gly) (interchain with G-Cter in SUMO2)). Ala-353 lines the (6R)-5,10-methylene-5,6,7,8-tetrahydrofolate pocket.

This sequence belongs to the thymidylate synthase family. In terms of assembly, homodimer.

It is found in the nucleus. The protein resides in the cytoplasm. It localises to the mitochondrion. The protein localises to the mitochondrion matrix. Its subcellular location is the mitochondrion inner membrane. It catalyses the reaction dUMP + (6R)-5,10-methylene-5,6,7,8-tetrahydrofolate = 7,8-dihydrofolate + dTMP. It functions in the pathway pyrimidine metabolism; dTTP biosynthesis. Its function is as follows. Catalyzes the reductive methylation of 2'-deoxyuridine 5'-monophosphate (dUMP) to thymidine 5'-monophosphate (dTMP), using the cosubstrate, 5,10- methylenetetrahydrofolate (CH2H4folate) as a 1-carbon donor and reductant and contributes to the de novo mitochondrial thymidylate biosynthesis pathway. The protein is Thymidylate synthase (TYMS) of Bos taurus (Bovine).